We begin with the raw amino-acid sequence, 61 residues long: Small ribosomal subunit protein uS14B (61 aa).

Zn(2+) is bound by residues cysteine 24, cysteine 27, cysteine 40, and cysteine 43.

Belongs to the universal ribosomal protein uS14 family. Zinc-binding uS14 subfamily. As to quaternary structure, part of the 30S ribosomal subunit. Contacts proteins S3 and S10. Zn(2+) serves as cofactor.

In terms of biological role, binds 16S rRNA, required for the assembly of 30S particles and may also be responsible for determining the conformation of the 16S rRNA at the A site. The sequence is that of Small ribosomal subunit protein uS14B from Levilactobacillus brevis (strain ATCC 367 / BCRC 12310 / CIP 105137 / JCM 1170 / LMG 11437 / NCIMB 947 / NCTC 947) (Lactobacillus brevis).